A 365-amino-acid chain; its full sequence is 3-dehydroquinate synthase (365 aa).

Residues 69 to 74, 103 to 107, 127 to 128, lysine 140, and lysine 149 each bind NAD(+); these read DGEKYK, GVIGD, and TT. Residues glutamate 182, histidine 245, and histidine 262 each coordinate Zn(2+).

It belongs to the sugar phosphate cyclases superfamily. Dehydroquinate synthase family. The cofactor is Co(2+). It depends on Zn(2+) as a cofactor. NAD(+) is required as a cofactor.

Its subcellular location is the cytoplasm. The enzyme catalyses 7-phospho-2-dehydro-3-deoxy-D-arabino-heptonate = 3-dehydroquinate + phosphate. It participates in metabolic intermediate biosynthesis; chorismate biosynthesis; chorismate from D-erythrose 4-phosphate and phosphoenolpyruvate: step 2/7. In terms of biological role, catalyzes the conversion of 3-deoxy-D-arabino-heptulosonate 7-phosphate (DAHP) to dehydroquinate (DHQ). The chain is 3-dehydroquinate synthase from Pseudomonas entomophila (strain L48).